We begin with the raw amino-acid sequence, 371 residues long: Putative glutamate--cysteine ligase 2 (371 aa).

It belongs to the glutamate--cysteine ligase type 2 family. YbdK subfamily.

The enzyme catalyses L-cysteine + L-glutamate + ATP = gamma-L-glutamyl-L-cysteine + ADP + phosphate + H(+). In terms of biological role, ATP-dependent carboxylate-amine ligase which exhibits weak glutamate--cysteine ligase activity. This chain is Putative glutamate--cysteine ligase 2, found in Nitrosospira multiformis (strain ATCC 25196 / NCIMB 11849 / C 71).